A 481-amino-acid polypeptide reads, in one-letter code: Transcription factor TGA9 (481 aa).

Residues Q91–R181 form a disordered region. Residues S97 to S109 show a composition bias toward low complexity. A compositionally biased stretch (polar residues) spans A110 to S126. Low complexity predominate over residues S143 to T155. The Nuclear localization signal motif lies at K165–G172. The bZIP domain occupies D176–R220. The tract at residues K178 to K198 is basic motif. Residues L204–L218 are leucine-zipper. The DOG1 domain maps to A242–R450.

Belongs to the bZIP family. Homodimer. Binds DNA as a dimer. Interacts with floral glutaredoxins GRXC7/ROXY1 and GRXC8/ROXY2 in the nucleus. Interacts with TGA1, TGA2, TGA3, TGA4, TGA5, TGA6, TGA7, TGA10 and PAN. Mostly expressed in stems, inflorescence apex and flowers, and, to a lower extent, in seedlings, leaves and siliques.

Its subcellular location is the nucleus. Functionally, together with TGA10, basic leucine-zipper transcription factor required for anther development, probably via the activation of SPL expression in anthers and via the regulation of genes with functions in early and middle tapetal development. Required for signaling responses to pathogen-associated molecular patterns (PAMPs) such as flg22 that involves chloroplastic reactive oxygen species (ROS) production and subsequent expression of H(2)O(2)-responsive genes. The protein is Transcription factor TGA9 of Arabidopsis thaliana (Mouse-ear cress).